We begin with the raw amino-acid sequence, 206 residues long: MRWLGRGERVVHDSRFLTVSVADVELPGGETVEHHFVRAPGAAIIVVQDERQRILMMYRHRFVSDLWGWELPGGLVDDREDPAVTAAREAEEETGYRPRNVRHLLTYQPMAGMVDSPHHIYLADGADLVGGPTECTEAQETRWMPLDEAAELLRSGRTVTSGTAIGLLAVLGLGGARQQPGGVQEQPGGAQQQGMNESHSGRTVRG.

The Nudix hydrolase domain occupies 37 to 166 (VRAPGAAIIV…RTVTSGTAIG (130 aa)). Residues 74–95 (GLVDDREDPAVTAAREAEEETG) carry the Nudix box motif. Residues 177–194 (RQQPGGVQEQPGGAQQQG) are compositionally biased toward low complexity. Residues 177–206 (RQQPGGVQEQPGGAQQQGMNESHSGRTVRG) form a disordered region.

The protein belongs to the Nudix hydrolase family. Mg(2+) serves as cofactor.

The catalysed reaction is CMP-5'-(N-acetyl-N-hydroxy-3-aminopropyl)phosphonate + H2O = 3-(N-acetyl-N-hydroxy)aminopropylphosphonate + CMP + H(+). The protein operates within antibiotic biosynthesis. Functionally, nucleotide hydrolase involved in the biosynthesis of the phosphonate antibiotic FR-900098, a potent antimalarial agent that acts as an inhibitor of 1-deoxy-D-xylulose 5-phosphate reductoisomerase (DXR), the first enzyme in the nonmevalonate pathway for isoprenoid biosynthesis. Catalyzes the hydrolysis of CMP-5'-(N-acetyl-N-hydroxy-3-aminopropyl)phosphonate (CMP-5'-FR-900098) to produce CMP and the final compound FR-900098. In vitro, has broad substrate specificity and also catalyzes the hydrolysis of all the other CMP-containing intermediates within the pathway and shows low activity toward CTP. This chain is CMP-5'-(N-acetyl-N-hydroxy-3-aminopropyl)phosphonate hydrolase, found in Streptomyces rubellomurinus (strain ATCC 31215).